Here is a 239-residue protein sequence, read N- to C-terminus: 7-cyano-7-deazaguanine synthase (239 aa).

8 to 18 (LSGGLDSPTVL) provides a ligand contact to ATP. The Zn(2+) site is built by C188, C196, C199, and C202.

Belongs to the QueC family. Zn(2+) serves as cofactor.

The enzyme catalyses 7-carboxy-7-deazaguanine + NH4(+) + ATP = 7-cyano-7-deazaguanine + ADP + phosphate + H2O + H(+). Its pathway is purine metabolism; 7-cyano-7-deazaguanine biosynthesis. Functionally, catalyzes the ATP-dependent conversion of 7-carboxy-7-deazaguanine (CDG) to 7-cyano-7-deazaguanine (preQ(0)). The sequence is that of 7-cyano-7-deazaguanine synthase from Picrophilus torridus (strain ATCC 700027 / DSM 9790 / JCM 10055 / NBRC 100828 / KAW 2/3).